The primary structure comprises 446 residues: MAKKLFIETHGCQMNEYDSSRMADLLGEHQALEVTENAAEADVILLNTCSIREKAQEKVFSKLGMWRDLKQQNPDLVIGVGGCVASQEGAAIRERAPYVDVVFGPQTLHRLPEMIDAARSTRKPQVDVSFPEIEKFDRLPEPRVDGPTAFVSVMEGCSKYCSFCVVPYTRGEEVSRPFDDVIAEVIHLAENGVREVTLLGQNVNGFRGQTHDGRLADFAELLRVVAAVDGIERIRYTTSHPLEFSDALIQAHAEVPELVKFIHLPVQSGSDRVLAAMKRNHTVLEYKSRIRKLKAAVPDICISSDFIVGFPGETEKDFEQTMKLVEEVGFDFSFSFIYSARPGTPAADLADDLPEEVKKRRLQILQGRIHQQGYEISRRMVGSTQRILVTDFSKKDPGMLQGRTENNRIVNFRCDNPRLIGQFAQVHIDDALPHSLRGTLIEGTLH.

Residues 3-120 (KKLFIETHGC…LPEMIDAARS (118 aa)) form the MTTase N-terminal domain. Residues C12, C49, C83, C157, C161, and C164 each coordinate [4Fe-4S] cluster. One can recognise a Radical SAM core domain in the interval 143–375 (RVDGPTAFVS…QGRIHQQGYE (233 aa)). Residues 378-442 (RRMVGSTQRI…PHSLRGTLIE (65 aa)) form the TRAM domain.

The protein belongs to the methylthiotransferase family. MiaB subfamily. As to quaternary structure, monomer. [4Fe-4S] cluster serves as cofactor.

Its subcellular location is the cytoplasm. It carries out the reaction N(6)-dimethylallyladenosine(37) in tRNA + (sulfur carrier)-SH + AH2 + 2 S-adenosyl-L-methionine = 2-methylsulfanyl-N(6)-dimethylallyladenosine(37) in tRNA + (sulfur carrier)-H + 5'-deoxyadenosine + L-methionine + A + S-adenosyl-L-homocysteine + 2 H(+). Functionally, catalyzes the methylthiolation of N6-(dimethylallyl)adenosine (i(6)A), leading to the formation of 2-methylthio-N6-(dimethylallyl)adenosine (ms(2)i(6)A) at position 37 in tRNAs that read codons beginning with uridine. The sequence is that of tRNA-2-methylthio-N(6)-dimethylallyladenosine synthase from Pseudomonas paraeruginosa (strain DSM 24068 / PA7) (Pseudomonas aeruginosa (strain PA7)).